The sequence spans 642 residues: tRNA uridine 5-carboxymethylaminomethyl modification enzyme MnmG (642 aa).

FAD is bound by residues 10 to 15 (GAGHAG), Val-122, and Ser-177. 269-283 (SARYCPSLEDKVMRF) provides a ligand contact to NAD(+). Gln-366 contacts FAD.

The protein belongs to the MnmG family. Homodimer. Heterotetramer of two MnmE and two MnmG subunits. Requires FAD as cofactor.

Its subcellular location is the cytoplasm. Its function is as follows. NAD-binding protein involved in the addition of a carboxymethylaminomethyl (cmnm) group at the wobble position (U34) of certain tRNAs, forming tRNA-cmnm(5)s(2)U34. The protein is tRNA uridine 5-carboxymethylaminomethyl modification enzyme MnmG of Syntrophobacter fumaroxidans (strain DSM 10017 / MPOB).